Reading from the N-terminus, the 595-residue chain is RuBisCO large subunit-binding protein subunit beta, chloroplastic (595 aa).

The transit peptide at 1–49 directs the protein to the chloroplast; sequence MASTFSATTSSCNLSSSAAISSFPLAAGKRNANKVVLPRKNRNVKVSAM.

It belongs to the chaperonin (HSP60) family. Oligomer of probably six alpha and six beta subunits.

The protein localises to the plastid. It is found in the chloroplast. This protein binds RuBisCO small and large subunits and is implicated in the assembly of the enzyme oligomer. The sequence is that of RuBisCO large subunit-binding protein subunit beta, chloroplastic from Pisum sativum (Garden pea).